The following is a 501-amino-acid chain: Aspartyl/glutamyl-tRNA(Asn/Gln) amidotransferase subunit B (501 aa).

The segment at 272-291 (QETRHYQETDGTTSKGRPKE) is disordered.

The protein belongs to the GatB/GatE family. GatB subfamily. Heterotrimer of A, B and C subunits.

It catalyses the reaction L-glutamyl-tRNA(Gln) + L-glutamine + ATP + H2O = L-glutaminyl-tRNA(Gln) + L-glutamate + ADP + phosphate + H(+). It carries out the reaction L-aspartyl-tRNA(Asn) + L-glutamine + ATP + H2O = L-asparaginyl-tRNA(Asn) + L-glutamate + ADP + phosphate + 2 H(+). Its function is as follows. Allows the formation of correctly charged Asn-tRNA(Asn) or Gln-tRNA(Gln) through the transamidation of misacylated Asp-tRNA(Asn) or Glu-tRNA(Gln) in organisms which lack either or both of asparaginyl-tRNA or glutaminyl-tRNA synthetases. The reaction takes place in the presence of glutamine and ATP through an activated phospho-Asp-tRNA(Asn) or phospho-Glu-tRNA(Gln). The sequence is that of Aspartyl/glutamyl-tRNA(Asn/Gln) amidotransferase subunit B from Corynebacterium efficiens (strain DSM 44549 / YS-314 / AJ 12310 / JCM 11189 / NBRC 100395).